A 225-amino-acid chain; its full sequence is Ribonuclease 3 (225 aa).

Residues 5 to 127 (LDRLQRSLGH…VFAATFLDQG (123 aa)) enclose the RNase III domain. Glu-40 contributes to the Mg(2+) binding site. Asp-44 is a catalytic residue. Mg(2+)-binding residues include Asp-113 and Glu-116. The active site involves Glu-116. The 71-residue stretch at 154–224 (DPKTALQELL…AELALAQLRK (71 aa)) folds into the DRBM domain.

It belongs to the ribonuclease III family. Homodimer. Requires Mg(2+) as cofactor.

The protein localises to the cytoplasm. The catalysed reaction is Endonucleolytic cleavage to 5'-phosphomonoester.. Its function is as follows. Digests double-stranded RNA. Involved in the processing of primary rRNA transcript to yield the immediate precursors to the large and small rRNAs (23S and 16S). Processes some mRNAs, and tRNAs when they are encoded in the rRNA operon. Processes pre-crRNA and tracrRNA of type II CRISPR loci if present in the organism. In Aromatoleum aromaticum (strain DSM 19018 / LMG 30748 / EbN1) (Azoarcus sp. (strain EbN1)), this protein is Ribonuclease 3.